A 218-amino-acid polypeptide reads, in one-letter code: Large ribosomal subunit protein uL3 (218 aa).

Belongs to the universal ribosomal protein uL3 family. In terms of assembly, part of the 50S ribosomal subunit. Forms a cluster with proteins L14 and L19.

Functionally, one of the primary rRNA binding proteins, it binds directly near the 3'-end of the 23S rRNA, where it nucleates assembly of the 50S subunit. This chain is Large ribosomal subunit protein uL3, found in Mycolicibacterium gilvum (strain PYR-GCK) (Mycobacterium gilvum (strain PYR-GCK)).